Reading from the N-terminus, the 667-residue chain is Protein angel homolog 1 (667 aa).

2 positions are modified to phosphoserine: S77 and S105.

It belongs to the CCR4/nocturin family.

This Rattus norvegicus (Rat) protein is Protein angel homolog 1.